Here is a 172-residue protein sequence, read N- to C-terminus: Bifunctional protein PyrR (172 aa).

A PRPP-binding motif is present at residues 93–105 (VILIDDVLYTGRT).

It belongs to the purine/pyrimidine phosphoribosyltransferase family. PyrR subfamily. In terms of assembly, homodimer and homohexamer; in equilibrium.

It carries out the reaction UMP + diphosphate = 5-phospho-alpha-D-ribose 1-diphosphate + uracil. Regulates transcriptional attenuation of the pyrimidine nucleotide (pyr) operon by binding in a uridine-dependent manner to specific sites on pyr mRNA. This disrupts an antiterminator hairpin in the RNA and favors formation of a downstream transcription terminator, leading to a reduced expression of downstream genes. In terms of biological role, also displays a weak uracil phosphoribosyltransferase activity which is not physiologically significant. This chain is Bifunctional protein PyrR, found in Streptococcus sanguinis (strain SK36).